Reading from the N-terminus, the 1191-residue chain is DNA-directed RNA polymerase subunit beta (1191 aa).

Residues arginine 1171 to alanine 1181 show a composition bias toward basic and acidic residues. A disordered region spans residues arginine 1171–aspartate 1191. The span at glutamate 1182–aspartate 1191 shows a compositional bias: low complexity.

The protein belongs to the RNA polymerase beta chain family. As to quaternary structure, the RNAP catalytic core consists of 2 alpha, 1 beta, 1 beta' and 1 omega subunit. When a sigma factor is associated with the core the holoenzyme is formed, which can initiate transcription.

It catalyses the reaction RNA(n) + a ribonucleoside 5'-triphosphate = RNA(n+1) + diphosphate. Functionally, DNA-dependent RNA polymerase catalyzes the transcription of DNA into RNA using the four ribonucleoside triphosphates as substrates. The polypeptide is DNA-directed RNA polymerase subunit beta (Streptococcus agalactiae serotype Ia (strain ATCC 27591 / A909 / CDC SS700)).